A 276-amino-acid polypeptide reads, in one-letter code: Casein kinase II subunit beta-3 (276 aa).

2 disordered regions span residues 1–22 (MYKE…LGGA) and 34–86 (KKLE…SEGD).

This sequence belongs to the casein kinase 2 subunit beta family. In terms of assembly, heterotetramer of two catalytic alpha subunits and two regulatory beta subunits. Interacts with CCA1. Interacts with LHY. Post-translationally, phosphorylated by alpha subunit.

The protein localises to the cytoplasm. It localises to the cytosol. It is found in the nucleus. Plays a complex role in regulating the basal catalytic activity of the alpha subunit. The tetrameric holoenzyme CK2, composed of two alpha and two beta subunits, phosphorylates the transcription factor PIF1 after an exposure to light, resulting in a proteasome-dependent degradation of PIF1 and promotion of photomorphogenesis. CK2 phosphorylates translation initiation factors. May participate in the regulation of the initiation of translation. Stimulates the binding of CCA1 to promoters. In Arabidopsis thaliana (Mouse-ear cress), this protein is Casein kinase II subunit beta-3 (CKB3).